The primary structure comprises 432 residues: Enolase (432 aa).

(2R)-2-phosphoglycerate is bound at residue Gln-163. Glu-205 (proton donor) is an active-site residue. Positions 242, 288, and 315 each coordinate Mg(2+). (2R)-2-phosphoglycerate is bound by residues Lys-340, Arg-369, Ser-370, and Lys-391. Lys-340 functions as the Proton acceptor in the catalytic mechanism.

This sequence belongs to the enolase family. As to quaternary structure, homodimer. Mg(2+) serves as cofactor.

The protein localises to the cytoplasm. It localises to the secreted. Its subcellular location is the cell surface. It carries out the reaction (2R)-2-phosphoglycerate = phosphoenolpyruvate + H2O. It functions in the pathway carbohydrate degradation; glycolysis; pyruvate from D-glyceraldehyde 3-phosphate: step 4/5. The covalent binding to the substrate causes inactivation of the enzyme, and possibly serves as a signal for the export of the protein. In terms of biological role, catalyzes the reversible conversion of 2-phosphoglycerate (2-PG) into phosphoenolpyruvate (PEP). It is essential for the degradation of carbohydrates via glycolysis. This Enterococcus hirae protein is Enolase.